A 187-amino-acid polypeptide reads, in one-letter code: MTTTEKALPRLKQRYREEIREALQQEFNYANVMQIPGVVKVVVNMGVGDAARDAKLINGAINDLALITGQKPEVRRARKSIAQFKLREGMPIGARVTLRGDRMWEFLDRLISIALPRIRDFRGLSPKQFDGTGNYTFGLNEQSMFHEIDVDSIDRPRGMDITVVTTATNDAEGRALLRALGFPFKEN.

It belongs to the universal ribosomal protein uL5 family. In terms of assembly, part of the 50S ribosomal subunit; part of the 5S rRNA/L5/L18/L25 subcomplex. Contacts the 5S rRNA and the P site tRNA. Forms a bridge to the 30S subunit in the 70S ribosome.

In terms of biological role, this is one of the proteins that bind and probably mediate the attachment of the 5S RNA into the large ribosomal subunit, where it forms part of the central protuberance. In the 70S ribosome it contacts protein S13 of the 30S subunit (bridge B1b), connecting the 2 subunits; this bridge is implicated in subunit movement. Contacts the P site tRNA; the 5S rRNA and some of its associated proteins might help stabilize positioning of ribosome-bound tRNAs. The polypeptide is Large ribosomal subunit protein uL5 (Mycolicibacterium smegmatis (strain ATCC 700084 / mc(2)155) (Mycobacterium smegmatis)).